A 548-amino-acid chain; its full sequence is Membrane protein insertase YidC (548 aa).

The helical transmembrane segment at 6–26 (NLLVIALLFVSFMIWQAWEQD) threads the bilayer. Residues 28-55 (NPQPQAQQTTQTTTTAAGSAADQGVPAS) are disordered. Over residues 30-50 (QPQAQQTTQTTTTAAGSAADQ) the composition is skewed to low complexity. A run of 4 helical transmembrane segments spans residues 350 to 370 (FVGNWGFSIIIITFIVRGIMY), 420 to 440 (LGGCFPLLIQMPIFLALYYML), 458 to 478 (LSAQDPYYILPILMGVTMFFI), and 499 to 519 (PVIFTVFFLWFPSGLVLYYIV).

It belongs to the OXA1/ALB3/YidC family. Type 1 subfamily. In terms of assembly, interacts with the Sec translocase complex via SecD. Specifically interacts with transmembrane segments of nascent integral membrane proteins during membrane integration.

The protein localises to the cell inner membrane. In terms of biological role, required for the insertion and/or proper folding and/or complex formation of integral membrane proteins into the membrane. Involved in integration of membrane proteins that insert both dependently and independently of the Sec translocase complex, as well as at least some lipoproteins. Aids folding of multispanning membrane proteins. The sequence is that of Membrane protein insertase YidC from Escherichia fergusonii (strain ATCC 35469 / DSM 13698 / CCUG 18766 / IAM 14443 / JCM 21226 / LMG 7866 / NBRC 102419 / NCTC 12128 / CDC 0568-73).